Here is a 375-residue protein sequence, read N- to C-terminus: All-trans-retinol dehydrogenase [NAD(+)] ADH1B (375 aa).

Residue Ser-2 is modified to N-acetylserine. Ser-23 is modified (phosphoserine). A Phosphotyrosine modification is found at Tyr-35. The Zn(2+) site is built by Cys-47, His-68, Cys-98, Cys-101, Cys-104, Cys-112, and Cys-175. NAD(+)-binding positions include 200–205, Asp-224, Lys-229, 293–295, and Arg-370; these read GLGGVG and VGV.

Belongs to the zinc-containing alcohol dehydrogenase family. Dimer of identical or non-identical chains of three types; alpha, beta and gamma. Zn(2+) is required as a cofactor.

It is found in the cytoplasm. The enzyme catalyses all-trans-retinol + NAD(+) = all-trans-retinal + NADH + H(+). It carries out the reaction all-trans-4-hydroxyretinol + NAD(+) = all-trans-4-hydroxyretinal + NADH + H(+). The catalysed reaction is all-trans-4-oxoretinol + NAD(+) = all-trans-4-oxoretinal + NADH + H(+). In terms of biological role, catalyzes the NAD-dependent oxidation of all-trans-retinol and its derivatives such as all-trans-4-hydroxyretinol and may participate in retinoid metabolism. In vitro can also catalyze the NADH-dependent reduction of all-trans-retinal and its derivatives such as all-trans-4-oxoretinal. Catalyzes in the oxidative direction with higher efficiency. Has the same affinity for all-trans-4-hydroxyretinol and all-trans-4-oxoretinal. The chain is All-trans-retinol dehydrogenase [NAD(+)] ADH1B from Homo sapiens (Human).